A 1070-amino-acid polypeptide reads, in one-letter code: Inactive tyrosine-protein kinase 7 (1070 aa).

An N-terminal signal peptide occupies residues 1–30 (MGAARGSPARPRRLPLLSVLLLPLLGGTQT). Ig-like C2-type domains are found at residues 31-120 (AIVF…ASFN), 128-218 (PVVL…FTLS), 225-317 (ARVV…EATL), 309-407 (PPII…VNIT), 412-497 (PSWL…ARVQ), 503-586 (KFTP…HVQL), and 578-680 (GQIR…APLY). Over 31–704 (AIVFIKQPSS…SPPPYKMIQT (674 aa)) the chain is Extracellular. Cysteine 53 and cysteine 101 form a disulfide bridge. N-linked (GlcNAc...) asparagine glycans are attached at residues asparagine 116, asparagine 175, asparagine 184, asparagine 214, asparagine 268, and asparagine 283. A disulfide bridge links cysteine 150 with cysteine 200. 2 disulfides stabilise this stretch: cysteine 246-cysteine 301 and cysteine 343-cysteine 391. N-linked (GlcNAc...) asparagine glycosylation is found at asparagine 405, asparagine 463, asparagine 567, and asparagine 646. Cystine bridges form between cysteine 433/cysteine 481, cysteine 524/cysteine 570, and cysteine 613/cysteine 664. Residues 705-725 (IGLSVGAAVAYIIAVLGLMFY) form a helical membrane-spanning segment. Residues 726-1070 (CKKRCKAKRL…LGDSTVDSKP (345 aa)) lie on the Cytoplasmic side of the membrane. Disordered regions lie at residues 736 to 759 (QKQP…NGQP) and 773 to 793 (GSGP…HFPR). An interaction with CTNNB1 region spans residues 794–1070 (SSLQPITTLG…LGDSTVDSKP (277 aa)). The 271-residue stretch at 796–1066 (LQPITTLGKS…IASALGDSTV (271 aa)) folds into the Protein kinase; inactive domain. Serine 1064 carries the phosphoserine modification.

It belongs to the protein kinase superfamily. Tyr protein kinase family. Insulin receptor subfamily. Interacts with CTNNB1. MMP14 cleaves PTK7 between Pro-621 and Leu-622 generating an N-terminal soluble (70 kDa) fragment and a membrane C-terminal (50 kDa) fragment. Proteolysis by MMP14 regulates PTK7 function in non-canonical Wnt signaling pathway. Highly expressed in lung, liver, pancreas, kidney, placenta and melanocytes. Weakly expressed in thyroid gland, ovary, brain, heart and skeletal muscle. Also expressed in erythroleukemia cells. But not expressed in colon.

The protein localises to the membrane. It localises to the cell junction. Functionally, inactive tyrosine kinase involved in Wnt signaling pathway. Component of both the non-canonical (also known as the Wnt/planar cell polarity signaling) and the canonical Wnt signaling pathway. Functions in cell adhesion, cell migration, cell polarity, proliferation, actin cytoskeleton reorganization and apoptosis. Has a role in embryogenesis, epithelial tissue organization and angiogenesis. The chain is Inactive tyrosine-protein kinase 7 (PTK7) from Homo sapiens (Human).